The chain runs to 382 residues: ATP phosphoribosyltransferase regulatory subunit (382 aa).

Belongs to the class-II aminoacyl-tRNA synthetase family. HisZ subfamily. In terms of assembly, heteromultimer composed of HisG and HisZ subunits.

The protein localises to the cytoplasm. Its pathway is amino-acid biosynthesis; L-histidine biosynthesis; L-histidine from 5-phospho-alpha-D-ribose 1-diphosphate: step 1/9. Functionally, required for the first step of histidine biosynthesis. May allow the feedback regulation of ATP phosphoribosyltransferase activity by histidine. The protein is ATP phosphoribosyltransferase regulatory subunit of Acidovorax sp. (strain JS42).